We begin with the raw amino-acid sequence, 104 residues long: Large ribosomal subunit protein uL24 (104 aa).

Belongs to the universal ribosomal protein uL24 family. In terms of assembly, part of the 50S ribosomal subunit.

In terms of biological role, one of two assembly initiator proteins, it binds directly to the 5'-end of the 23S rRNA, where it nucleates assembly of the 50S subunit. Its function is as follows. One of the proteins that surrounds the polypeptide exit tunnel on the outside of the subunit. The sequence is that of Large ribosomal subunit protein uL24 from Colwellia psychrerythraea (strain 34H / ATCC BAA-681) (Vibrio psychroerythus).